We begin with the raw amino-acid sequence, 183 residues long: MDKYTSRYHKFYDEVVVPKLMKELEIKNIMECPKLEKIIVNMGVGEATQNSKLIDAAMADLTIITGQKPLLRKAKKSEAGFKLREGMPIGAKVTLRKERMYDFLDRLVNVVLPRVRDFEGVPSNSFDGRGNYSVGLRDQLVFPEIDFDKVEKLLGMSITMVSSAKTDEEGRALLKAFGMPFKK.

Belongs to the universal ribosomal protein uL5 family. In terms of assembly, part of the 50S ribosomal subunit; part of the 5S rRNA/L5/L18/L25 subcomplex. Contacts the 5S rRNA and the P site tRNA. Forms a bridge to the 30S subunit in the 70S ribosome.

This is one of the proteins that bind and probably mediate the attachment of the 5S RNA into the large ribosomal subunit, where it forms part of the central protuberance. In the 70S ribosome it contacts protein S13 of the 30S subunit (bridge B1b), connecting the 2 subunits; this bridge is implicated in subunit movement. Contacts the P site tRNA; the 5S rRNA and some of its associated proteins might help stabilize positioning of ribosome-bound tRNAs. This chain is Large ribosomal subunit protein uL5, found in Fusobacterium nucleatum subsp. nucleatum (strain ATCC 25586 / DSM 15643 / BCRC 10681 / CIP 101130 / JCM 8532 / KCTC 2640 / LMG 13131 / VPI 4355).